A 149-amino-acid polypeptide reads, in one-letter code: MALYEHVFLARQDITPQQVDALVEQYKGVLEANGGKVGRVENWGLKSLTYRIKKNRKAHYVLMDIDAPAPAVHEVERQMRINEDILRYMTIAVEKHEEGPSAMMQKRDRDDRPRRDGDRPDRGGFGDRGPRPDRGDRDDRPRRPREDRA.

Residues 94 to 149 (EKHEEGPSAMMQKRDRDDRPRRDGDRPDRGGFGDRGPRPDRGDRDDRPRRPREDRA) form a disordered region.

This sequence belongs to the bacterial ribosomal protein bS6 family.

In terms of biological role, binds together with bS18 to 16S ribosomal RNA. This is Small ribosomal subunit protein bS6 from Sinorhizobium fredii (strain NBRC 101917 / NGR234).